The primary structure comprises 339 residues: 4-amino-5-hydroxymethyl-2-methylpyrimidine phosphate synthase (339 aa).

Lys-62 is subject to N6-(pyridoxal phosphate)lysine. The active site involves His-66. Residue 115-118 (GEFG) participates in pyridoxal 5'-phosphate binding. The CCCFC; essential for catalytic activity, may be the site of iron coordination motif lies at 195–199 (CCCFC).

This sequence belongs to the NMT1/THI5 family. In terms of assembly, homodimer. Fe(3+) serves as cofactor.

It carries out the reaction N(6)-(pyridoxal phosphate)-L-lysyl-[4-amino-5-hydroxymethyl-2-methylpyrimidine phosphate synthase] + L-histidyl-[4-amino-5-hydroxymethyl-2-methylpyrimidine phosphate synthase] + 2 Fe(3+) + 4 H2O = L-lysyl-[4-amino-5-hydroxymethyl-2-methylpyrimidine phosphate synthase] + (2S)-2-amino-5-hydroxy-4-oxopentanoyl-[4-amino-5-hydroxymethyl-2-methylpyrimidine phosphate synthase] + 4-amino-2-methyl-5-(phosphooxymethyl)pyrimidine + 3-oxopropanoate + 2 Fe(2+) + 2 H(+). Its pathway is cofactor biosynthesis; thiamine diphosphate biosynthesis. Its function is as follows. Responsible for the formation of the pyrimidine heterocycle in the thiamine biosynthesis pathway. Catalyzes the formation of hydroxymethylpyrimidine phosphate (HMP-P) from histidine and pyridoxal phosphate (PLP). The protein uses PLP and the active site histidine to form HMP-P, generating an inactive enzyme. The enzyme can only undergo a single turnover, which suggests it is a suicide enzyme. This is 4-amino-5-hydroxymethyl-2-methylpyrimidine phosphate synthase from Candida albicans (strain WO-1) (Yeast).